A 441-amino-acid polypeptide reads, in one-letter code: Amino-acid acetyltransferase (441 aa).

One can recognise an N-acetyltransferase domain in the interval 295–434; it reads EQVRRATIND…QELYNYQRRS (140 aa).

It belongs to the acetyltransferase family. ArgA subfamily. In terms of assembly, homohexamer.

The protein resides in the cytoplasm. The enzyme catalyses L-glutamate + acetyl-CoA = N-acetyl-L-glutamate + CoA + H(+). Its pathway is amino-acid biosynthesis; L-arginine biosynthesis; N(2)-acetyl-L-ornithine from L-glutamate: step 1/4. The chain is Amino-acid acetyltransferase from Yersinia enterocolitica serotype O:8 / biotype 1B (strain NCTC 13174 / 8081).